Consider the following 1268-residue polypeptide: Vigilin (1268 aa).

Position 2 is an N-acetylserine (serine 2). Threonine 8 carries the phosphothreonine modification. 2 positions are modified to phosphoserine: serine 11 and serine 31. 7 KH domains span residues 150–212 (QASA…RHEV), 222–284 (RAVE…VARI), 295–357 (TTTI…LTEV), 364–424 (FTVS…QEQI), 435–497 (MDYV…KREL), 507–570 (ERTK…TKYM), and 581–643 (SYSI…RSRI). Phosphothreonine occurs at positions 295 and 296. Residue serine 317 is modified to Phosphoserine. Position 437 is a phosphotyrosine (tyrosine 437). A Phosphoserine modification is found at serine 645. KH domains are found at residues 653 to 716 (IAEV…KKQL), 727 to 790 (SFTV…QKEL), 800 to 863 (VVED…KKRI), 873 to 967 (QVTV…KEAL), 972 to 1034 (PVTI…KAGL), 1052 to 1117 (SFKL…RDAI), and 1127 to 1190 (MVSE…IDHI). Residues 910–947 (PDREENPVHSVEPSIQENGDEAGEGREAKETDPGSPRR) form a disordered region. A compositionally biased stretch (basic and acidic residues) spans 932–947 (GEGREAKETDPGSPRR). Lysine 991 bears the N6-acetyllysine mark. The segment at 1213-1268 (PPAHEESRAPSKGFVVRDAPWTSNSSEKAPDMSSSEEFPSFGAQVAPKTLPWGPKR) is disordered. Polar residues predominate over residues 1233-1249 (WTSNSSEKAPDMSSSEE). A phosphoserine mark is found at serine 1247 and serine 1252.

The protein localises to the cytoplasm. It localises to the nucleus. Functionally, appears to play a role in cell sterol metabolism. It may function to protect cells from over-accumulation of cholesterol. This chain is Vigilin (Hdlbp), found in Mus musculus (Mouse).